A 155-amino-acid polypeptide reads, in one-letter code: Small ribosomal subunit protein uS7c (155 aa).

This sequence belongs to the universal ribosomal protein uS7 family. In terms of assembly, part of the 30S ribosomal subunit.

The protein localises to the plastid. It localises to the chloroplast. Functionally, one of the primary rRNA binding proteins, it binds directly to 16S rRNA where it nucleates assembly of the head domain of the 30S subunit. This chain is Small ribosomal subunit protein uS7c (rps7), found in Lilium superbum (Turk's cap lily).